Reading from the N-terminus, the 255-residue chain is Zinc import ATP-binding protein ZnuC (255 aa).

An ABC transporter domain is found at 5–220 (VALEHIAVAF…PDFIAMFGYR (216 aa)).

Belongs to the ABC transporter superfamily. Zinc importer (TC 3.A.1.15.5) family. In terms of assembly, the complex is composed of two ATP-binding proteins (ZnuC), two transmembrane proteins (ZnuB) and a solute-binding protein (ZnuA).

The protein localises to the cell inner membrane. The catalysed reaction is Zn(2+)(out) + ATP(in) + H2O(in) = Zn(2+)(in) + ADP(in) + phosphate(in) + H(+)(in). Functionally, part of the ABC transporter complex ZnuABC involved in zinc import. Responsible for energy coupling to the transport system. The protein is Zinc import ATP-binding protein ZnuC of Sodalis glossinidius (strain morsitans).